A 553-amino-acid chain; its full sequence is Retrotransposon Gag-like protein 3 (553 aa).

Residues 2–43 (VEDLAASYVTLKLENEILQAQVKRLMEENAALQAQIPELQKS) are a coiled coil. Disordered stretches follow at residues 38-274 (PELQ…PLDP) and 474-514 (SGGV…EAER). A compositionally biased stretch (basic and acidic residues) spans 45–57 (AVKEHEPLRKPSE). Residues 58–73 (AQEPPESPEFPAARES) are compositionally biased toward low complexity. A compositionally biased stretch (basic and acidic residues) spans 87–113 (EPTKIREPREPSAISELREPPEIKEPQ). Polar residues predominate over residues 118-127 (TNESGESSAI). Over residues 132–147 (GSPEIKEPHLPPKSKE) the composition is skewed to basic and acidic residues. Positions 239 to 250 (QTVPEYQETSSQ) are enriched in polar residues. Residues 474-483 (SGGVDSSSSS) show a composition bias toward low complexity. Residues 495–507 (TENQPVQATSNRP) show a composition bias toward polar residues. The segment at 523-537 (CLYCGHPGHFARDCP) adopts a CCHC-type zinc-finger fold.

As to expression, expressed in embryonic myogenic progenitor cells, not expressed in adult and aged satellite cells.

The protein resides in the nucleus. Functionally, may function as a transcriptional regulator. Plays a role in postnatal myogenesis, may be involved in the regulation of satellite cells self-renewal. The protein is Retrotransposon Gag-like protein 3 of Mus musculus (Mouse).